A 270-amino-acid chain; its full sequence is Urease accessory protein UreD (270 aa).

This sequence belongs to the UreD family. UreD, UreF and UreG form a complex that acts as a GTP-hydrolysis-dependent molecular chaperone, activating the urease apoprotein by helping to assemble the nickel containing metallocenter of UreC. The UreE protein probably delivers the nickel.

It localises to the cytoplasm. Its function is as follows. Required for maturation of urease via the functional incorporation of the urease nickel metallocenter. The sequence is that of Urease accessory protein UreD from Actinobacillus pleuropneumoniae serotype 7 (strain AP76).